The sequence spans 1021 residues: Collagen alpha-1(I) chain (1021 aa).

The tract at residues 1-1021 is disordered; that stretch reads DEKSAGGISV…PGPPGPPGPP (1021 aa). Lys-3 bears the Allysine mark. Ser-4 is modified (phosphoserine). 4-hydroxyproline is present on residues Pro-23, Pro-26, Pro-29, Pro-38, Pro-41, Pro-44, Pro-59, Pro-74, Pro-80, Pro-89, and Pro-95. A compositionally biased stretch (low complexity) spans 31–50; it reads PQGFQGPPGEPGEPGASGPM. Over residues 62 to 76 the composition is skewed to basic and acidic residues; it reads NGDDGEAGKPGRPGE. Residue Lys-98 is modified to 5-hydroxylysine; alternate. O-linked (Gal...) hydroxylysine; alternate glycosylation is present at Lys-98. Ser-104 carries the post-translational modification Phosphoserine. Positions 112 to 128 are enriched in low complexity; that stretch reads DAGPAGPKGEPGSPGEN. A 4-hydroxyproline mark is found at Pro-122, Pro-125, Pro-131, Pro-140, Pro-146, Pro-167, Pro-176, Pro-179, Pro-206, Pro-209, Pro-221, Pro-227, Pro-236, Pro-242, Pro-245, and Pro-260. Over residues 146 to 164 the composition is skewed to low complexity; the sequence is PGASGPAGARGNDGATGAA. The segment covering 166–178 has biased composition (pro residues); that stretch reads PPGPTGPAGPPGF. The span at 212-262 shows a compositional bias: low complexity; that stretch reads AGAAGPAGNPGADGQPGAKGANGAPGIAGAPGFPGARGPSGPQGPSGAPGP. Lys-263 is subject to 5-hydroxylysine. Residues Pro-269, Pro-272, Pro-284, Pro-293, Pro-308, Pro-314, Pro-323, and Pro-329 each carry the 4-hydroxyproline modification. A compositionally biased stretch (gly residues) spans 318–327; the sequence is GERGGPGSRG. Lys-338 is modified (5-hydroxylysine). A 4-hydroxyproline mark is found at Pro-347, Pro-356, Pro-362, Pro-368, Pro-377, Pro-380, Pro-389, Pro-398, Pro-404, Pro-416, Pro-425, Pro-434, Pro-437, Pro-455, Pro-472, Pro-478, Pro-484, Pro-490, Pro-496, Pro-502, Pro-514, Pro-523, Pro-534, Pro-546, Pro-549, Pro-555, Pro-561, and Pro-570. Over residues 371-425 the composition is skewed to low complexity; the sequence is KGLTGSPGSPGPDGKTGPPGPAGQDGRPGPAGPPGARGQAGVMGFPGPKGAAGEP. Residues 484–493 show a composition bias toward low complexity; sequence PGEAGKPGEQ. Over residues 536-558 the composition is skewed to low complexity; sequence NDGAKGDAGAPGAPGSQGAPGLQ. Lys-582 carries the post-translational modification 5-hydroxylysine. Pro-588 and Pro-603 each carry 4-hydroxyproline. Positions 615–629 are enriched in low complexity; that stretch reads AGPSGPAGPTGARGA. Ser-618 bears the Phosphoserine mark. A 4-hydroxyproline mark is found at Pro-630, Pro-636, Pro-639, Pro-648, Pro-654, Pro-681, and Pro-690. The span at 642 to 672 shows a compositional bias: low complexity; sequence AGFAGPPGADGQPGAKGEPGDAGAKGDAGPS. 5-hydroxylysine is present on Lys-693. The span at 698–714 shows a compositional bias: low complexity; sequence SAGPPGATGFPGAAGRV. 4-hydroxyproline is present on residues Pro-702 and Pro-708. Pro-716 carries the 3-hydroxyproline modification. 4-hydroxyproline occurs at positions 717, 726, 729, 750, 759, 768, 777, 794, 803, 806, 812, 827, 833, 839, 848, and 854. The segment covering 743–752 has biased composition (low complexity); that stretch reads ETGPAGRPGE. Over residues 762–777 the composition is skewed to low complexity; that stretch reads SGEKGSPGADGPAGAP. Positions 826–836 are enriched in pro residues; that stretch reads PPGPMGPPGLA. Positions 838–853 are enriched in low complexity; it reads PPGEAGREGSPGAEGS. Position 863 is a 5-hydroxylysine (Lys-863). Residues 871-886 show a composition bias toward pro residues; that stretch reads PGPPGAPGAPGAPGPV. Residues Pro-874, Pro-877, and Pro-880 each carry the 4-hydroxyproline modification. Residues 907-921 show a composition bias toward low complexity; that stretch reads AGPAGARGPAGPQGP. Residues 922–936 show a composition bias toward basic and acidic residues; the sequence is RGDKGETGEQGDRGI. Lys-925 is modified (5-hydroxylysine). Lys-937 bears the 5-hydroxylysine; alternate mark. Lys-937 carries O-linked (Gal...) hydroxylysine; alternate glycosylation. 4-hydroxyproline occurs at positions 952, 955, 973, and 988. Low complexity predominate over residues 955–988; sequence PGEQGPSGASGPAGPRGPPGSAGTPGKDGLNGLP. Pro-993 bears the 3-hydroxyproline mark. 4-hydroxyproline is present on Pro-994. Pro residues predominate over residues 1006 to 1021; that stretch reads VGPPGPPGPPGPPGPP. 3-hydroxyproline is present on Pro-1008. At Pro-1009 the chain carries 4-hydroxyproline. Position 1011 is a 3-hydroxyproline (Pro-1011). Pro-1012 carries the post-translational modification 4-hydroxyproline. Pro-1014 is subject to 3-hydroxyproline. 3 positions are modified to 4-hydroxyproline: Pro-1015, Pro-1018, and Pro-1021.

The protein belongs to the fibrillar collagen family. Trimers of one alpha 2(I) and two alpha 1(I) chains. Post-translationally, contains mostly 4-hydroxyproline. Proline residues at the third position of the tripeptide repeating unit (G-X-Y) are hydroxylated in some or all of the chains. Contains 3-hydroxyproline at a few sites. This modification occurs on the first proline residue in the sequence motif Gly-Pro-Hyp, where Hyp is 4-hydroxyproline. In terms of processing, lysine residues at the third position of the tripeptide repeating unit (G-X-Y) are 5-hydroxylated in some or all of the chains. Post-translationally, O-glycosylated on hydroxylated lysine residues. The O-linked glycan consists of a Glc-Gal disaccharide. Expressed in bones.

It is found in the secreted. It localises to the extracellular space. Its subcellular location is the extracellular matrix. In terms of biological role, type I collagen is a member of group I collagen (fibrillar forming collagen). This chain is Collagen alpha-1(I) chain, found in Doedicurus sp. (South American giant glyptodont).